Here is an 87-residue protein sequence, read N- to C-terminus: Guanine nucleotide-binding protein subunit gamma (87 aa).

Residue Cys84 is modified to Cysteine methyl ester. Residue Cys84 is the site of S-geranylgeranyl cysteine attachment. The propeptide at 85–87 (LLV) is removed in mature form.

The protein belongs to the G protein gamma family. G proteins are composed of 3 units, alpha, beta and gamma. In terms of processing, the N-terminus is blocked.

Its subcellular location is the cell membrane. In terms of biological role, guanine nucleotide-binding proteins (G proteins) are involved as a modulator or transducer in various transmembrane signaling systems. This major G-protein of the squid photoreceptor is involved in visual transduction. The beta and gamma chains are required for the GTPase activity, for replacement of GDP by GTP, and for G protein-effector interaction. The sequence is that of Guanine nucleotide-binding protein subunit gamma from Loligo forbesii (Veined squid).